The chain runs to 331 residues: High-affinity nickel-transport protein NixA (331 aa).

7 helical membrane passes run 3 to 23 (LWFP…ALLF), 77 to 97 (MGHS…IAWA), 110 to 130 (VVGT…NAII), 184 to 204 (PVGF…LLAL), 213 to 233 (VVGM…FDTL), 259 to 279 (ITAL…FQVI), and 302 to 322 (DLGY…FFLW).

This sequence belongs to the NiCoT transporter (TC 2.A.52) family.

Its subcellular location is the cell inner membrane. In terms of biological role, high-affinity nickel intake protein. Imports nickel ions in an energy-dependent fashion. Necessary for the expression of catalytically active urease. This is High-affinity nickel-transport protein NixA (nixA) from Helicobacter pylori (strain J99 / ATCC 700824) (Campylobacter pylori J99).